The chain runs to 327 residues: Ribosomal RNA large subunit methyltransferase F (327 aa).

It belongs to the methyltransferase superfamily. METTL16/RlmF family.

The protein localises to the cytoplasm. The catalysed reaction is adenosine(1618) in 23S rRNA + S-adenosyl-L-methionine = N(6)-methyladenosine(1618) in 23S rRNA + S-adenosyl-L-homocysteine + H(+). Functionally, specifically methylates the adenine in position 1618 of 23S rRNA. In Marinomonas sp. (strain MWYL1), this protein is Ribosomal RNA large subunit methyltransferase F.